Consider the following 3046-residue polypeptide: Nucleosome-remodeling factor subunit BPTF (3046 aa).

Residues 1–232 (MRGRRGRPPK…DIPPLEFPKS (232 aa)) form a disordered region. Over residues 22–33 (PAPPPPPPPPTS) the composition is skewed to pro residues. A compositionally biased stretch (low complexity) spans 62-72 (TRLSSPRGGSS). Pro residues predominate over residues 78 to 87 (PPPPPAPPST). Gly residues predominate over residues 91 to 110 (GRGGRGGGGGRTGGGGGGGH). Residues 129-186 (HESEEEEEEEDMVSEEEEEEDGDAEETQDSEDDEEDEMEEDDDDSDYPEEMEDDDDDA) show a composition bias toward acidic residues. Residues 190–203 (TESSFRSHSTYSST) are compositionally biased toward low complexity. Positions 205–215 (GRRKPRVHRPR) are enriched in basic residues. The residue at position 216 (S216) is a Phosphoserine. Positions 240-300 (NEHIMNVIAI…LKAVLREEDT (61 aa)) constitute a DDT domain. The segment at 390 to 437 (DDHCRVCHKLGDLLCCETCSAVYHLECVKPPLEEVPEDEWQCEVCVAH) adopts a PHD-type 1 zinc-finger fold. Basic and acidic residues-rich tracts occupy residues 567–609 (IDNV…SDDK) and 616–628 (EQGK…EVGD). Positions 567 to 774 (IDNVKSPEET…GAGKGASGST (208 aa)) are disordered. S572 carries the phosphoserine modification. Residues 574 to 604 (EETEKDKNETENDSKDAEKNREEFEDQSLEK) adopt a coiled-coil conformation. Composition is skewed to polar residues over residues 631-653 (NSVS…SPSE) and 690-705 (TCES…SIQP). An interaction with KEAP1 region spans residues 640 to 749 (NTTNATSEET…PVSIQEEIVG (110 aa)). Positions 706–723 (NLENSNSSSELNSSQSES) are enriched in low complexity. The span at 725–738 (KAADDPENGERESH) shows a compositional bias: basic and acidic residues. A phosphoserine mark is found at S763 and S817. An interaction with MAZ region spans residues 839-921 (YFKLGQEGKY…QLENNIPSSF (83 aa)). N6-acetyllysine is present on K880. The stretch at 978-1007 (MTSIEREEKEKVKKKEKKQEEEETMQQATW) forms a coiled coil. The interval 1057 to 1157 (YRKSLEGTKN…MKTESHVNCQ (101 aa)) is disordered. T1064 carries the post-translational modification Phosphothreonine. Basic and acidic residues-rich tracts occupy residues 1087–1102 (IKIE…KGSD) and 1113–1152 (DISK…KTES). Residues K1088, K1138, and K1209 each participate in a glycyl lysine isopeptide (Lys-Gly) (interchain with G-Cter in SUMO2) cross-link. Disordered stretches follow at residues 1215-1339 (KGIG…GNDF), 1371-1448 (IVSS…FRTR), 1465-1537 (GEST…NGKD), and 1605-1706 (NSSE…GESK). Polar residues-rich tracts occupy residues 1220–1232 (TSTN…SESP), 1242–1257 (QSDS…ANND), and 1266–1285 (CSES…TTNK). The residue at position 1231 (S1231) is a Phosphoserine. The span at 1287–1305 (YPKDRVLDDVSIRSPETKC) shows a compositional bias: basic and acidic residues. S1300 bears the Phosphoserine mark. The residue at position 1303 (T1303) is a Phosphothreonine. S1310 is subject to Phosphoserine. The span at 1372 to 1386 (VSSSKSALHSSVPKS) shows a compositional bias: low complexity. Composition is skewed to polar residues over residues 1409-1426 (SESN…SIQD) and 1434-1444 (VQNSNESISEQ). Basic and acidic residues predominate over residues 1491–1525 (KKLEERPVNKCSDQIKLKNTTDKKNNENRESEKKG). Polar residues predominate over residues 1629–1656 (TLPSTKESDSTQTTTPSASCPESNSVNQ). K1730 participates in a covalent cross-link: Glycyl lysine isopeptide (Lys-Gly) (interchain with G-Cter in SUMO2). Disordered stretches follow at residues 1973-2003 (VPET…TPKQ) and 2041-2070 (QAKK…STIS). Residues 2022 to 2050 (EIRAFAERVEKEKAQAVEQQAKKRLEQQK) adopt a coiled-coil conformation. The segment covering 2054–2070 (IATSTTSPTSSTTSTIS) has biased composition (low complexity). Position 2098 is a phosphoserine (S2098). Omega-N-methylarginine is present on R2155. A disordered region spans residues 2160-2180 (TIRPNTSGSGGTTSNSQVITG). Asymmetric dimethylarginine is present on residues R2162, R2184, and R2191. A compositionally biased stretch (polar residues) spans 2232-2256 (VSAPNTVSSTPGQKSLTSATSTSNI). Disordered regions lie at residues 2232–2270 (VSAP…QQGQ), 2346–2549 (TAST…RPQL), 2714–2733 (QAAK…SKQN), and 2795–2858 (PCPP…ISTT). Composition is skewed to low complexity over residues 2257–2270 (QSSA…QQGQ) and 2346–2362 (TAST…AGTG). Over residues 2363–2375 (EQRQSKLSPQMQV) the composition is skewed to polar residues. Positions 2391–2431 (PAEAQPQTAQPSAQPQPQTQPQSPAQPEVQTQPEVQTQTTV) are enriched in low complexity. Polar residues predominate over residues 2432–2485 (SSHVPSEAQPTHAQSSKPQVAAQSQPQSNVQGQSPVRVQSPSQTRIRPSTPSQL). S2465 is modified (phosphoserine). Positions 2486-2538 (SPGQQSQVQTTTSQPIPIQPHTSLQIPSQGQPQSQPQVQSSTQTLSSGQTLNQ) are enriched in low complexity. Positions 2706 to 2732 (DKIDKEEKQAAKKRKREESVEQKRSKQ) form a coiled coil. Positions 2714-2729 (QAAKKRKREESVEQKR) are enriched in basic and acidic residues. Positions 2795–2818 (PCPPVTPAPPAPPAPPPSPPPPPA) are enriched in pro residues. Residues 2838–2847 (KREEEKDSSS) are compositionally biased toward basic and acidic residues. The PHD-type 2 zinc-finger motif lies at 2867-2918 (KLYCICKTPYDESKFYIGCDRCQNWYHGRCVGILQSEAELIDEYVCPQCQST). In terms of domain architecture, Bromo spans 2927–3031 (PLTEKDYEGL…SFFVQKLKGF (105 aa)).

The protein belongs to the PBTF family. Interacts with MAZ. Interacts with KEAP1. Component of the NURF-1 ISWI chromatin remodeling complex (also called the nucleosome-remodeling factor (NURF) complex) at least composed of SMARCA1 (isoform 2), BPTF, RBBP4 and RBBP7. Within the complex interacts with isoform 2 of SMARCA1. Component of the BPFT-SMARCA1 complex at least composed of SMARCA1 (isoform 1), BPFT, RBBP4 and RBBP7; the complex is catalytically inactive and does not remodel chromatin. Within the complex interacts with isoform 1 of SMARCA1. Component of the NURF-5 ISWI chromatin remodeling complex at least composed of SMARCA5/SNF2H and BPTF. Within NURF-5 ISWI chromatin remodeling complex interacts with SMARCA5/SNF2H. In terms of processing, phosphorylation enhances DNA-binding. Post-translationally, highly susceptible to proteolysis. As to expression, ubiquitously expressed, with highest levels in testis. Present in kidney, liver and brain. In the brain, highest levels are found in motor cortex (at protein level).

Its subcellular location is the cytoplasm. The protein resides in the nucleus. Functionally, regulatory subunit of the ATP-dependent NURF-1 and NURF-5 ISWI chromatin remodeling complexes, which form ordered nucleosome arrays on chromatin and facilitate access to DNA during DNA-templated processes such as DNA replication, transcription, and repair. The NURF-1 ISWI chromatin remodeling complex has a lower ATP hydrolysis rate than the NURF-5 ISWI chromatin remodeling complex. Within the NURF-1 ISWI chromatin-remodeling complex, binds to the promoters of En1 and En2 to positively regulate their expression and promote brain development. Histone-binding protein which binds to H3 tails trimethylated on 'Lys-4' (H3K4me3), which mark transcription start sites of active genes. Binds to histone H3 tails dimethylated on 'Lys-4' (H3K4Me2) to a lesser extent. May also regulate transcription through direct binding to DNA or transcription factors. In Homo sapiens (Human), this protein is Nucleosome-remodeling factor subunit BPTF (BPTF).